Reading from the N-terminus, the 368-residue chain is NAD(P)H-quinone oxidoreductase subunit 1, chloroplastic (368 aa).

6 helical membrane-spanning segments follow: residues 27-47, 97-117, 130-150, 269-289, 308-328, and 348-368; these read FIWIAFSILILLLTITIGVLV, WLFNIGPAIVVIPVFLSYLVI, IGVFFWIAISSIVPLGLLMAG, SSLFVTILYLGGWHFSIPFLL, IIIGIIIVLIKSYLFSFIAIM, and FLLPIALGNLLLTASFQAFLL.

This sequence belongs to the complex I subunit 1 family. In terms of assembly, NDH is composed of at least 16 different subunits, 5 of which are encoded in the nucleus.

It localises to the plastid. The protein resides in the chloroplast thylakoid membrane. The catalysed reaction is a plastoquinone + NADH + (n+1) H(+)(in) = a plastoquinol + NAD(+) + n H(+)(out). The enzyme catalyses a plastoquinone + NADPH + (n+1) H(+)(in) = a plastoquinol + NADP(+) + n H(+)(out). Functionally, NDH shuttles electrons from NAD(P)H:plastoquinone, via FMN and iron-sulfur (Fe-S) centers, to quinones in the photosynthetic chain and possibly in a chloroplast respiratory chain. The immediate electron acceptor for the enzyme in this species is believed to be plastoquinone. Couples the redox reaction to proton translocation, and thus conserves the redox energy in a proton gradient. The chain is NAD(P)H-quinone oxidoreductase subunit 1, chloroplastic from Physcomitrium patens (Spreading-leaved earth moss).